Consider the following 248-residue polypeptide: Tyrosine recombinase XerD-like (248 aa).

The Core-binding (CB) domain maps to 1 to 72; the sequence is MKSYIEPFIA…TANQFLYYLY (72 aa). Positions 85 to 248 constitute a Tyr recombinase domain; that stretch reads DTMKVMRTEK…PVTLEKYYKS (164 aa). Active-site residues include Lys149 and Arg213. The O-(3'-phospho-DNA)-tyrosine intermediate role is filled by Tyr245.

The protein belongs to the 'phage' integrase family. XerD-like subfamily.

The protein resides in the cytoplasm. In terms of biological role, putative tyrosine recombinase. Not involved in the cutting and rejoining of the recombining DNA molecules on dif(SL) site. This chain is Tyrosine recombinase XerD-like, found in Streptococcus pyogenes serotype M6 (strain ATCC BAA-946 / MGAS10394).